The chain runs to 279 residues: Calcium-activated potassium channel subunit beta-3 (279 aa).

The Cytoplasmic portion of the chain corresponds to Met1 to Met60. The chain crosses the membrane as a helical span at residues Leu61–Leu81. The Extracellular portion of the chain corresponds to Lys82 to Gln207. Residue Asn131 is glycosylated (N-linked (GlcNAc...) asparagine). The chain crosses the membrane as a helical span at residues Met208–Val228. Topologically, residues Gly229–Ser279 are cytoplasmic.

This sequence belongs to the KCNMB (TC 8.A.14.1) family. KCNMB3 subfamily. As to quaternary structure, interacts with KCNMA1 tetramer. There are probably 4 molecules of KCMNB3 per KCNMA1 tetramer. Post-translationally, N-glycosylated. In terms of processing, the extracellular domain contains disulfide bond essential for the gating mechanism. Isoform 1, isoform 3 and isoform 4 are widely expressed. Isoform 2 is expressed placenta, pancreas, kidney and heart. Isoform 1 and isoform 3 are highly expressed in pancreas and testis.

Its subcellular location is the membrane. Its function is as follows. Regulatory subunit of the calcium activated potassium KCNMA1 (maxiK) channel. Modulates the calcium sensitivity and gating kinetics of KCNMA1, thereby contributing to KCNMA1 channel diversity. Alters the functional properties of the current expressed by the KCNMA1 channel. Isoform 2, isoform 3 and isoform 4 partially inactivate the current of KCNBMA. Isoform 4 induces a fast and incomplete inactivation of KCNMA1 channel that is detectable only at large depolarizations. In contrast, isoform 1 does not induce detectable inactivation of KCNMA1. Two or more subunits of KCNMB3 are required to block the KCNMA1 tetramer. The protein is Calcium-activated potassium channel subunit beta-3 (KCNMB3) of Homo sapiens (Human).